A 567-amino-acid chain; its full sequence is MAKNVNSKANGKKSGSVKRALKEKKQPEPEFSDSEDDEVDQEKLVEELDEDFDEVANMLGADVTDPEEKKQSKLERKRKRDEEATAEYTKPEVVDNEDDAQNDKFEDAGLSEPTMRAISDMGFKTMTKVQAKTIPPLLAGKDVLGAAKTGSGKTLAFLIPAIELLYSLKFKPRNGTGVIVVSPTRELALQIFGVARELMAHHTQTFGIVIGGANRRQEAEKLAKGVNLLIATPGRLLDHLQNTQGFVFKNLKALVIDEADRILEIGFEEEMKQIIKILPKEERQSMLFSATQTTKVEDLARISLRPGPLYINVVPETAASTADGLEQGYVVCDSDKRFLLLFSFLKKYSKKKIIVFLSSCNSVKYFGELLNYIDLPVLDLHGKQKQQKRTNTFFEFCNAKQGTLVCTDVAARGLDIPAVDWIIQFDPPDDPRDYIHRVGRTARGSNGKGKSLMFLTPSELGFLRYLKAANVPLNEYEFPTNKIVNIQSQLSKLIKSNYWLHQSAKDGYRSYLQAYASHHLKTVYQIDKLDLVKVAKSFGFDVPPKVNITIGASGKSIEKKHKKQKRA.

The segment at 1-109 is disordered; sequence MAKNVNSKAN…AQNDKFEDAG (109 aa). Residues 30-40 show a composition bias toward acidic residues; that stretch reads EFSDSEDDEVD. Positions 35–88 form a coiled coil; the sequence is EDDEVDQEKLVEELDEDFDEVANMLGADVTDPEEKKQSKLERKRKRDEEATAEY. The short motif at 103–131 is the Q motif element; that stretch reads DKFEDAGLSEPTMRAISDMGFKTMTKVQA. Positions 134-310 constitute a Helicase ATP-binding domain; it reads IPPLLAGKDV…RISLRPGPLY (177 aa). 147–154 contributes to the ATP binding site; the sequence is AKTGSGKT. Positions 257–260 match the DEAD box motif; that stretch reads DEAD. A Helicase C-terminal domain is found at 324–484; it reads GLEQGYVVCD…EYEFPTNKIV (161 aa).

It belongs to the DEAD box helicase family. DDX18/HAS1 subfamily. In terms of assembly, associates in the nucleolus with the 60S and pre-60S ribosomal subunits.

The protein resides in the nucleus. It is found in the nucleolus. It catalyses the reaction ATP + H2O = ADP + phosphate + H(+). ATP-dependent RNA helicase involved in 40S ribosomal subunit biogenesis. Required for the processing and cleavage of 35S pre-rRNA at sites A0, A1, and A2, leading to mature 18S rRNA. In Scheffersomyces stipitis (strain ATCC 58785 / CBS 6054 / NBRC 10063 / NRRL Y-11545) (Yeast), this protein is ATP-dependent RNA helicase HAS1 (HAS1).